The following is a 336-amino-acid chain: GTPase Obg (336 aa).

Residues 1–159 (MKFLDQAKIY…RWVWLRLKLI (159 aa)) form the Obg domain. An OBG-type G domain is found at 160 to 328 (ADIGLVGLPN…LLRLLQDRVT (169 aa)). Residues 166-173 (GLPNAGKS), 191-195 (FTTLH), 213-216 (DIPG), 280-283 (NKCD), and 309-311 (SGA) contribute to the GTP site. The Mg(2+) site is built by Ser173 and Thr193.

Belongs to the TRAFAC class OBG-HflX-like GTPase superfamily. OBG GTPase family. In terms of assembly, monomer. Mg(2+) serves as cofactor.

It localises to the cytoplasm. Its function is as follows. An essential GTPase which binds GTP, GDP and possibly (p)ppGpp with moderate affinity, with high nucleotide exchange rates and a fairly low GTP hydrolysis rate. Plays a role in control of the cell cycle, stress response, ribosome biogenesis and in those bacteria that undergo differentiation, in morphogenesis control. The polypeptide is GTPase Obg (Gluconobacter oxydans (strain 621H) (Gluconobacter suboxydans)).